The primary structure comprises 105 residues: Small ribosomal subunit protein uS17 (105 aa).

Belongs to the universal ribosomal protein uS17 family. As to quaternary structure, part of the 30S ribosomal subunit.

In terms of biological role, one of the primary rRNA binding proteins, it binds specifically to the 5'-end of 16S ribosomal RNA. The polypeptide is Small ribosomal subunit protein uS17 (Thermus aquaticus).